The chain runs to 437 residues: Adenosylhomocysteinase (437 aa).

3 residues coordinate substrate: Thr-54, Asp-125, and Glu-170. 171-173 (TTT) serves as a coordination point for NAD(+). Substrate is bound by residues Lys-200 and Asp-204. NAD(+) contacts are provided by residues Asn-205, 234–239 (GYGWVG), Glu-258, Asn-293, 314–316 (AGH), and Asn-361.

The protein belongs to the adenosylhomocysteinase family. NAD(+) is required as a cofactor.

The protein localises to the cytoplasm. It carries out the reaction S-adenosyl-L-homocysteine + H2O = L-homocysteine + adenosine. The protein operates within amino-acid biosynthesis; L-homocysteine biosynthesis; L-homocysteine from S-adenosyl-L-homocysteine: step 1/1. In terms of biological role, may play a key role in the regulation of the intracellular concentration of adenosylhomocysteine. This Pyrobaculum aerophilum (strain ATCC 51768 / DSM 7523 / JCM 9630 / CIP 104966 / NBRC 100827 / IM2) protein is Adenosylhomocysteinase.